We begin with the raw amino-acid sequence, 96 residues long: Co-chaperonin GroES (96 aa).

The protein belongs to the GroES chaperonin family. As to quaternary structure, heptamer of 7 subunits arranged in a ring. Interacts with the chaperonin GroEL.

Its subcellular location is the cytoplasm. Functionally, together with the chaperonin GroEL, plays an essential role in assisting protein folding. The GroEL-GroES system forms a nano-cage that allows encapsulation of the non-native substrate proteins and provides a physical environment optimized to promote and accelerate protein folding. GroES binds to the apical surface of the GroEL ring, thereby capping the opening of the GroEL channel. The polypeptide is Co-chaperonin GroES (Paraburkholderia phymatum (strain DSM 17167 / CIP 108236 / LMG 21445 / STM815) (Burkholderia phymatum)).